The primary structure comprises 168 residues: Cell division inhibitor SulA (168 aa).

The tract at residues 105–111 (ALETGNY) is ftsZ binding. Residues 161–168 (RIHSGMVH) form a lon protease binding region.

It belongs to the SulA family. As to quaternary structure, interacts with FtsZ. Is rapidly cleaved and degraded by the Lon protease once DNA damage is repaired.

Component of the SOS system and an inhibitor of cell division. Accumulation of SulA causes rapid cessation of cell division and the appearance of long, non-septate filaments. In the presence of GTP, binds a polymerization-competent form of FtsZ in a 1:1 ratio, thus inhibiting FtsZ polymerization and therefore preventing it from participating in the assembly of the Z ring. This mechanism prevents the premature segregation of damaged DNA to daughter cells during cell division. The chain is Cell division inhibitor SulA from Cronobacter sakazakii (strain ATCC BAA-894) (Enterobacter sakazakii).